The chain runs to 85 residues: ATP synthase subunit c (85 aa).

2 helical membrane passes run 1-21 and 53-73; these read MLAW…ALVG and LLFA…VALI.

Belongs to the ATPase C chain family. As to quaternary structure, F-type ATPases have 2 components, F(1) - the catalytic core - and F(0) - the membrane proton channel. F(1) has five subunits: alpha(3), beta(3), gamma(1), delta(1), epsilon(1). F(0) has three main subunits: a(1), b(2) and c(10-14). The alpha and beta chains form an alternating ring which encloses part of the gamma chain. F(1) is attached to F(0) by a central stalk formed by the gamma and epsilon chains, while a peripheral stalk is formed by the delta and b chains.

It localises to the cell inner membrane. Its function is as follows. F(1)F(0) ATP synthase produces ATP from ADP in the presence of a proton or sodium gradient. F-type ATPases consist of two structural domains, F(1) containing the extramembraneous catalytic core and F(0) containing the membrane proton channel, linked together by a central stalk and a peripheral stalk. During catalysis, ATP synthesis in the catalytic domain of F(1) is coupled via a rotary mechanism of the central stalk subunits to proton translocation. Functionally, key component of the F(0) channel; it plays a direct role in translocation across the membrane. A homomeric c-ring of between 10-14 subunits forms the central stalk rotor element with the F(1) delta and epsilon subunits. The sequence is that of ATP synthase subunit c from Dictyoglomus turgidum (strain DSM 6724 / Z-1310).